A 293-amino-acid chain; its full sequence is UDP-N-acetylglucosamine transferase subunit ALG13 (293 aa).

The protein belongs to the glycosyltransferase 28 family. As to quaternary structure, heterodimer with ALG14 to form a functional enzyme.

Its subcellular location is the endoplasmic reticulum. The enzyme catalyses an N-acetyl-alpha-D-glucosaminyl-diphospho-di-trans,poly-cis-dolichol + UDP-N-acetyl-alpha-D-glucosamine = an N,N'-diacetylchitobiosyl-diphospho-di-trans,poly-cis-dolichol + UDP + H(+). Its function is as follows. Involved in protein N-glycosylation. Essential for the second step of the dolichol-linked oligosaccharide pathway. The polypeptide is UDP-N-acetylglucosamine transferase subunit ALG13 (ALG13) (Candida albicans (strain SC5314 / ATCC MYA-2876) (Yeast)).